A 432-amino-acid polypeptide reads, in one-letter code: Bifunctional protein GlmU (432 aa).

Positions 1–224 (MSEISVIILA…EENFMGINDK (224 aa)) are pyrophosphorylase. Residues 9–12 (LAAG), Lys23, and 82–83 (GT) contribute to the UDP-N-acetyl-alpha-D-glucosamine site. Asp103 provides a ligand contact to Mg(2+). 4 residues coordinate UDP-N-acetyl-alpha-D-glucosamine: Gly136, Glu150, Asn165, and Asn222. Mg(2+) is bound at residue Asn222. Residues 225 to 245 (FALSKAETIIQNEIKENLMKN) form a linker region. Residues 246–432 (GVLMRLPESI…FFAKFFKEIK (187 aa)) are N-acetyltransferase. 2 residues coordinate UDP-N-acetyl-alpha-D-glucosamine: Arg309 and Lys326. The Proton acceptor role is filled by His337. The UDP-N-acetyl-alpha-D-glucosamine site is built by Tyr340 and Asn351. Acetyl-CoA is bound by residues 360–361 (NY), Ser379, Ala397, and Arg414.

In the N-terminal section; belongs to the N-acetylglucosamine-1-phosphate uridyltransferase family. The protein in the C-terminal section; belongs to the transferase hexapeptide repeat family. As to quaternary structure, homotrimer. The cofactor is Mg(2+).

It is found in the cytoplasm. The catalysed reaction is alpha-D-glucosamine 1-phosphate + acetyl-CoA = N-acetyl-alpha-D-glucosamine 1-phosphate + CoA + H(+). The enzyme catalyses N-acetyl-alpha-D-glucosamine 1-phosphate + UTP + H(+) = UDP-N-acetyl-alpha-D-glucosamine + diphosphate. It functions in the pathway nucleotide-sugar biosynthesis; UDP-N-acetyl-alpha-D-glucosamine biosynthesis; N-acetyl-alpha-D-glucosamine 1-phosphate from alpha-D-glucosamine 6-phosphate (route II): step 2/2. The protein operates within nucleotide-sugar biosynthesis; UDP-N-acetyl-alpha-D-glucosamine biosynthesis; UDP-N-acetyl-alpha-D-glucosamine from N-acetyl-alpha-D-glucosamine 1-phosphate: step 1/1. Its pathway is bacterial outer membrane biogenesis; LPS lipid A biosynthesis. In terms of biological role, catalyzes the last two sequential reactions in the de novo biosynthetic pathway for UDP-N-acetylglucosamine (UDP-GlcNAc). The C-terminal domain catalyzes the transfer of acetyl group from acetyl coenzyme A to glucosamine-1-phosphate (GlcN-1-P) to produce N-acetylglucosamine-1-phosphate (GlcNAc-1-P), which is converted into UDP-GlcNAc by the transfer of uridine 5-monophosphate (from uridine 5-triphosphate), a reaction catalyzed by the N-terminal domain. This is Bifunctional protein GlmU from Campylobacter hominis (strain ATCC BAA-381 / DSM 21671 / CCUG 45161 / LMG 19568 / NCTC 13146 / CH001A).